The chain runs to 117 residues: Gamma-aminobutyric acid receptor-associated protein-like 2 (117 aa).

K24 carries the N6-acetyllysine modification. Residues S39, S87, and S88 each carry the phosphoserine modification. G116 carries the Phosphatidylethanolamine amidated glycine; alternate lipid modification. The Phosphatidylserine amidated glycine; alternate moiety is linked to residue G116. A propeptide (removed in mature form) is located at residue F117.

The protein belongs to the ATG8 family. As to quaternary structure, monomer. Interacts with ATG3, ATG7, ATG13 and ULK1. Interacts with TP53INP1 and TP53INP2. Interacts with TBC1D25. Directly interacts with SQSTM1 and BNIP3. Interacts with TECPR2 and PCM1. Interacts with TBC1D5. Interacts with TRIM5. Interacts with MEFV and TRIM21. Interacts with WDFY3. Interacts with UBA5; promoting recruitment of UBA5 to the endoplasmic reticulum membrane. Interacts with GOSR1. Interacts with KBTBD6 and KBTBD7; the interaction is direct. Interacts with reticulophagy regulators RETREG1, RETREG2 and RETREG3. Interacts with IRGM. Interacts with DNM2. Interacts with NCOA4. Interacts with IRGQ. In terms of processing, the precursor molecule is cleaved by ATG4 (ATG4A, ATG4B, ATG4C or ATG4D) to expose the glycine at the C-terminus and form the cytosolic form, GABARAPL2-I. The processed form is then activated by APG7L/ATG7, transferred to ATG3 and conjugated to phosphatidylethanolamine (PE) phospholipid to form the membrane-bound form, GABARAPL2-II. During non-canonical autophagy, the processed form is conjugated to phosphatidylserine (PS) phospholipid. ATG4 proteins also mediate the delipidation of PE-conjugated forms required for GABARAPL2 recycling when autophagosomes fuse with lysosomes. In addition, ATG4B and ATG4D mediate delipidation of ATG8 proteins conjugated to PS during non-canonical autophagy. ATG4B constitutes the major protein for proteolytic activation. ATG4D is the main enzyme for delipidation activity. Post-translationally, phosphorylation at Ser-87 and Ser-88 by TBK1 prevents interaction with ATG4 (ATG4A, ATG4B, ATG4C or ATG4D). Phosphorylation by TBK1 on autophagosomes prevents their delipidation by ATG4 and premature removal from nascent autophagosomes. Ubiquitous. Expressed at high levels in the brain, heart, prostate, ovary, spleen and skeletal muscle. Expressed at very low levels in lung, thymus and small intestine.

It is found in the cytoplasmic vesicle. The protein localises to the autophagosome. Its subcellular location is the endoplasmic reticulum membrane. It localises to the golgi apparatus. Functionally, ubiquitin-like modifier involved in intra-Golgi traffic. Modulates intra-Golgi transport through coupling between NSF activity and SNAREs activation. It first stimulates the ATPase activity of NSF which in turn stimulates the association with GOSR1. Involved in autophagy. Plays a role in mitophagy which contributes to regulate mitochondrial quantity and quality by eliminating the mitochondria to a basal level to fulfill cellular energy requirements and preventing excess ROS production. Whereas LC3s are involved in elongation of the phagophore membrane, the GABARAP/GATE-16 subfamily is essential for a later stage in autophagosome maturation. This Bos taurus (Bovine) protein is Gamma-aminobutyric acid receptor-associated protein-like 2.